The primary structure comprises 310 residues: Serine protease 30 (310 aa).

Positions 1–21 are cleaved as a signal peptide; that stretch reads MESRARCIFLLLLQILTRARG. Residues 22–36 constitute a propeptide, activation peptide; sequence DILPSVCGHSRDAGK. One can recognise a Peptidase S1 domain in the interval 37–277; sequence IVGGQDALEG…YVDWIQRILA (241 aa). A disulfide bridge connects residues Cys-63 and Cys-79. Residues His-78 and Asp-128 each act as charge relay system in the active site. 3 disulfide bridges follow: Cys-161–Cys-235, Cys-191–Cys-214, and Cys-225–Cys-253. Ser-229 serves as the catalytic Charge relay system. Asn-238 and Asn-279 each carry an N-linked (GlcNAc...) asparagine glycan. A lipid anchor (GPI-anchor amidated serine) is attached at Ser-281. The propeptide at 282-310 is removed in mature form; it reads DAYGYHSSASAAYQMLLPVLLAVALPGSL.

It belongs to the peptidase S1 family. Expressed primarily in distal gut.

Its subcellular location is the cell membrane. With respect to regulation, inhibited by aprotinin, leupeptin, benzamidine and soybean trypsin inhibitor. Partially inhibited by PMSF and DFP. Its function is as follows. Selectively cleaves synthetic peptide substrates of trypsin. Activates the epithelial sodium channel ENaC. In Mus musculus (Mouse), this protein is Serine protease 30 (Prss30).